The chain runs to 431 residues: Enolase (431 aa).

Gln167 provides a ligand contact to (2R)-2-phosphoglycerate. Residue Glu209 is the Proton donor of the active site. The Mg(2+) site is built by Asp246, Glu289, and Asp316. The (2R)-2-phosphoglycerate site is built by Lys341, Arg370, Ser371, and Lys392. The active-site Proton acceptor is Lys341.

The protein belongs to the enolase family. As to quaternary structure, component of the RNA degradosome, a multiprotein complex involved in RNA processing and mRNA degradation. Requires Mg(2+) as cofactor.

It is found in the cytoplasm. Its subcellular location is the secreted. It localises to the cell surface. It catalyses the reaction (2R)-2-phosphoglycerate = phosphoenolpyruvate + H2O. It functions in the pathway carbohydrate degradation; glycolysis; pyruvate from D-glyceraldehyde 3-phosphate: step 4/5. Its function is as follows. Catalyzes the reversible conversion of 2-phosphoglycerate (2-PG) into phosphoenolpyruvate (PEP). It is essential for the degradation of carbohydrates via glycolysis. This Shewanella baltica (strain OS155 / ATCC BAA-1091) protein is Enolase.